The following is a 492-amino-acid chain: Glutamyl-tRNA(Gln) amidotransferase subunit A (492 aa).

Residues Lys78 and Ser158 each act as charge relay system in the active site. Residue Ser182 is the Acyl-ester intermediate of the active site.

Belongs to the amidase family. GatA subfamily. As to quaternary structure, heterotrimer of A, B and C subunits.

The catalysed reaction is L-glutamyl-tRNA(Gln) + L-glutamine + ATP + H2O = L-glutaminyl-tRNA(Gln) + L-glutamate + ADP + phosphate + H(+). Functionally, allows the formation of correctly charged Gln-tRNA(Gln) through the transamidation of misacylated Glu-tRNA(Gln) in organisms which lack glutaminyl-tRNA synthetase. The reaction takes place in the presence of glutamine and ATP through an activated gamma-phospho-Glu-tRNA(Gln). The protein is Glutamyl-tRNA(Gln) amidotransferase subunit A of Rhodopseudomonas palustris (strain HaA2).